A 1588-amino-acid polypeptide reads, in one-letter code: MRKNSSHENQSSENIIEFPYVDFEELNVHSNIFSELEHAKPSTQQQQQQQNISNETTSTGPRICISRDEFKAVNLLTKEEINVRVTPKKEEFSRGLDFISDLYDQTARKSGAVRVIPPDNWKCPLTINTTTFKFLTRKNNPSSMSLVSNYPLDAISSQQKFHGNDKTLEKNSAKATINKSNSTAETSSTATVEPYDSNDLYRIFDRPDAVVLSYIFVLGKAVDLLQIKQWLQLSKQKNLLEFEFWSQAAQHYKLDVNSLRNAYNLYAETGVTTRTGNDGGSPINRPAKRVKRQNHIPKCKLCAQEGSSLVTCCICQSNYHYACVEAPFAPFSDIHYWTCNSCIPSSLKILWKEVDYHCISSFLQSSNELASSLKKQLPSFLAQTPLTLPSNTKTPPASARQSSRRTRSTSGKGFETKISINLDSDIKLLNTLSPLETFFWCCSFPSTASTSSPFSYYPESLPTPLLGRAVNTTAFPTSRQNAYYNDPWNLYFIHFSKLSPLRFTPPGILTSTISLGQPLTCQGWQRDSMSLFGMHYHHYGAQRIWYVIPEVDGPKYEKLLNDLSPSFIQEKPETLIKSKILLPISMLISNGIQVLTFVQNSNEFVITSPNTYYTVLDTGFSLSESVPFATKEWIQDMHAENSFNMYKNLHISAPFSLDHILLANATLDKTVHSAYWLMTCLKDRVDRELTLRNEFRKRHPLLTWIPTPLESSVMACAFCKTFAYLASIEEKNGTKTACLSHKDECFPNTDSDLTVLVRYDDNALLAAYSKVVERAHKADTWLENYKEALGSDNSRPSLKVLKTLLNEAETICCPLQEVSLVRNLVKTAQQWLDKFAIIFKKKSMVKKEKRKPKRGSATHSHLESPSEEVEDLNSSNINEADLLINLVEEAEQFTFDFPEMAVAFEKAESLKIFREKANAMKERSLSYEECLAIVEEGESLQLKTPELLYFKQYMEKTEWIDSFNQISQKTDSTMEELVELIERGEKIGLTSDNENMATALLLKEKSENWMKQVEGLLSQETLSTSKLFQLKSEANSICINRGLLEQLNEVLQKSENFHTQLVSLISRARDPDYYSRPTIEEAKTVLAESENLTNKPEEYTVAQKLLTQTYEWVRRGKRLFGKANAPLEIFNQHLEFVEQRNTNAMVDEGSDAPFHVGNEYYVIAGSDPSDFHYCFCRQPEAGMMIECELCHEWYHAKCMKMSKKKLRADEKFICPICDYRVEVPRHSHRPPLIELQKMVDDIPTLPFQPIEIELLKRVVKQAEEFKNKMQSEVCDPTQLSEKDVPLLQFYLRKLEGSEILFTEELNVFRQKLHEFMPVAPQPPPFIGESRSNRKPRPTKRQREIMEQVESGKLTSAEGAAAIAATQTRNQNNFISKPFNVHTLSTTLSPWAMKSLAQAAISPNPMPSAHDLLPTSNPAELFTNISPEIKELSVDSTSTLGGLNSSHLVSDQNASVICLCRQPFAISDGTVQCHNCLEWFHYECVGLSSDIVSTLSNYACPDCCSKEGKLYPWNTRPRSTPSVWLSQAYSPSVLQGTTENVAFLNKAFSASANLFDVLPVSNTPSHFSKMDYVLEDRKPDLFTETYLSM.

The segment at 38-60 (HAKPSTQQQQQQQNISNETTSTG) is disordered. Residues 51–60 (NISNETTSTG) are compositionally biased toward polar residues. One can recognise a JmjN domain in the interval 82 to 124 (NVRVTPKKEEFSRGLDFISDLYDQTARKSGAVRVIPPDNWKCP). The segment at 298–345 (KCKLCAQEGSSLVTCCICQSNYHYACVEAPFAPFSDIHYWTCNSCIPS) adopts a PHD-type 1 zinc-finger fold. The segment covering 385–395 (PLTLPSNTKTP) has biased composition (polar residues). A disordered region spans residues 385–412 (PLTLPSNTKTPPASARQSSRRTRSTSGK). The JmjC domain maps to 475-645 (FPTSRQNAYY…DMHAENSFNM (171 aa)). Positions 848–872 (EKRKPKRGSATHSHLESPSEEVEDL) are disordered. Residues 1171-1220 (FHYCFCRQPEAGMMIECELCHEWYHAKCMKMSKKKLRADEKFICPICDYR) form a PHD-type 2 zinc finger. The interval 1319–1341 (APQPPPFIGESRSNRKPRPTKRQ) is disordered. The PHD-type 3 zinc-finger motif lies at 1454 to 1505 (SVICLCRQPFAISDGTVQCHNCLEWFHYECVGLSSDIVSTLSNYACPDCCSK).

It localises to the nucleus. In terms of biological role, has a role in regulating chromatin structure via global deacetylation of histone H3. This function is associated with the activity of a histone deacetylase. This chain is Multicopy suppressor of chk1 protein 1 (msc1), found in Schizosaccharomyces pombe (strain 972 / ATCC 24843) (Fission yeast).